We begin with the raw amino-acid sequence, 946 residues long: MAGQVLDGKACAQQFRSNIANEIKSIQGHVPGFAPNLAIIQVGNRPDSATYVRMKRKAAEEAGIVANFIHLDESATEFEVLRYVDQLNEDPHTHGIIVQLPLPAHLDEDRITSRVLAEKDVDGFGPTNIGELNKKNGHPFFLPCTPKGIIELLHKANVTIEGSRSVVIGRSDIVGSPVAELLKSLNSTVTITHSKTRDIASYLHDADIVVVAIGQPEFVKGEWFKPRDGTSSDKKTVVIDVGTNYVADPSKKSGFKCVGDVEFNEAIKYVHLITPVPGGVGPMTVAMLMQNTLIAAKRQMEESSKPLQIPPLPLKLLTPVPSDIDISRAQQPKLINQLAQELGIYSHELELYGHYKAKISPKVIERLQTRQNGKYILVSGITPTPLGEGKSTTTMGLVQALTAHLGKPAIANVRQPSLGPTLGVKGGAAGGGYSQVIPMDEFNLHLTGDIHAIGAANNLLAAAIDTRMFHETTQKNDATFYNRLVPRKNGKRKFTPSMQRRLNRLGIQKTNPDDLTPEEINKFARLNIDPDTITIKRVVDINDRMLRQITIGQAPTEKNHTRVTGFDITVASELMAILALSKDLRDMKERIGRVVVAADVNRSPVTVEDVGCTGALTALLRDAIKPNLMQTLEGTPVLVHAGPFANISIGASSVIADRVALKLVGTEPEAKTEAGYVVTEAGFDFTMGGERFFNIKCRSSGLTPNAVVLVATVRALKSHGGAPDVKPGQPLPSAYTEENIEFVEKGAANMCKQIANIKQFGVPVVVAINKFETDTEGEIAAIRKAALEAGAFEAVTSNHWAEGGKGAIDLAKAVIEASNQPVDFHFLYDVNSSVEDKLTTIVQKMYGGAAIDILPEAQRKIDMYKEQGFGNLPICIAKTQYSLSHDATLKGVPTGFTFPIRDVRLSNGAGYLYALAAEIQTIPGLATYAGYMAVEVDDDGEIDGLF.

The segment at 2–319 (AGQVLDGKAC…PPLPLKLLTP (318 aa)) is methylenetetrahydrofolate dehydrogenase and cyclohydrolase. Residues 51–55 (YVRMK) and 98–100 (VQL) contribute to the substrate site. An NADP(+)-binding site is contributed by 169-171 (GRS). A Phosphoserine modification is found at S176. S194 is a binding site for NADP(+). 277 to 281 (PGGVG) is a substrate binding site. T318 is subject to Phosphothreonine. The formyltetrahydrofolate synthetase stretch occupies residues 320–946 (VPSDIDISRA…DDDGEIDGLF (627 aa)). Position 322 is a phosphoserine (S322). 384-391 (TPLGEGKS) contacts ATP.

In the N-terminal section; belongs to the tetrahydrofolate dehydrogenase/cyclohydrolase family. It in the C-terminal section; belongs to the formate--tetrahydrofolate ligase family. In terms of assembly, homodimer.

It localises to the cytoplasm. The protein resides in the nucleus. The enzyme catalyses (6R)-5,10-methylene-5,6,7,8-tetrahydrofolate + NADP(+) = (6R)-5,10-methenyltetrahydrofolate + NADPH. It carries out the reaction (6R)-5,10-methenyltetrahydrofolate + H2O = (6R)-10-formyltetrahydrofolate + H(+). The catalysed reaction is (6S)-5,6,7,8-tetrahydrofolate + formate + ATP = (6R)-10-formyltetrahydrofolate + ADP + phosphate. Its pathway is one-carbon metabolism; tetrahydrofolate interconversion. Its function is as follows. Cytoplasmic isozyme of C-1-tetrahydrofolate synthase. The trifunctional enzyme catalyzes the interconversion of the one-carbon derivatives of tetrahydrofolate (THF) between different oxidation states by the enzymatic activities 10-formyltetrahydrofolate synthetase, 5,lO-methenyltetrahydrofolate cyclohydrolase, and 5,lO-methylenetetrahydrofolate dehydrogenase. Involved in the generation of one-carbon intermediates in the biosynthesis of the purine bases. This is C-1-tetrahydrofolate synthase, cytoplasmic (ADE3) from Saccharomyces cerevisiae (strain ATCC 204508 / S288c) (Baker's yeast).